The following is a 469-amino-acid chain: Glutamate--tRNA ligase (469 aa).

A 'HIGH' region motif is present at residues 9–19 (PSPTGFLHVGG). Positions 98, 100, 125, and 127 each coordinate Zn(2+). Positions 236 to 240 (KLSKR) match the 'KMSKS' region motif. ATP is bound at residue lysine 239.

This sequence belongs to the class-I aminoacyl-tRNA synthetase family. Glutamate--tRNA ligase type 1 subfamily. As to quaternary structure, monomer. Requires Zn(2+) as cofactor.

The protein resides in the cytoplasm. The enzyme catalyses tRNA(Glu) + L-glutamate + ATP = L-glutamyl-tRNA(Glu) + AMP + diphosphate. Functionally, catalyzes the attachment of glutamate to tRNA(Glu) in a two-step reaction: glutamate is first activated by ATP to form Glu-AMP and then transferred to the acceptor end of tRNA(Glu). The polypeptide is Glutamate--tRNA ligase (Shewanella sp. (strain W3-18-1)).